We begin with the raw amino-acid sequence, 381 residues long: Secretion apparatus protein BsaZ (381 aa).

4 helical membrane-spanning segments follow: residues Ile28–Thr48, Ile80–Ser100, Ala134–Leu154, and Ile175–Val195. The interval Asn343 to Ala381 is disordered. Low complexity predominate over residues Gly364 to Ala381.

Belongs to the type III secretion exporter family.

The protein localises to the cell membrane. Part of the bsa type III secretion system, is involved in the intracellular replication of invading bacteria inside the host cell. Probably necessary for the lysis of the vacuole membrane and escape into the host cell cytoplasm. The chain is Secretion apparatus protein BsaZ (bsaZ) from Burkholderia thailandensis (strain ATCC 700388 / DSM 13276 / CCUG 48851 / CIP 106301 / E264).